The primary structure comprises 135 residues: S-adenosylmethionine decarboxylase proenzyme (135 aa).

Catalysis depends on S64, which acts as the Schiff-base intermediate with substrate; via pyruvic acid. Residue S64 is modified to Pyruvic acid (Ser); by autocatalysis. Residue H69 is the Proton acceptor; for processing activity of the active site. The active-site Proton donor; for catalytic activity is the C84.

Belongs to the prokaryotic AdoMetDC family. Type 1 subfamily. As to quaternary structure, heterotetramer of two alpha and two beta chains arranged as a dimer of alpha/beta heterodimers. Pyruvate serves as cofactor. Post-translationally, is synthesized initially as an inactive proenzyme. Formation of the active enzyme involves a self-maturation process in which the active site pyruvoyl group is generated from an internal serine residue via an autocatalytic post-translational modification. Two non-identical subunits are generated from the proenzyme in this reaction, and the pyruvate is formed at the N-terminus of the alpha chain, which is derived from the carboxyl end of the proenzyme. The post-translation cleavage follows an unusual pathway, termed non-hydrolytic serinolysis, in which the side chain hydroxyl group of the serine supplies its oxygen atom to form the C-terminus of the beta chain, while the remainder of the serine residue undergoes an oxidative deamination to produce ammonia and the pyruvoyl group blocking the N-terminus of the alpha chain.

The catalysed reaction is S-adenosyl-L-methionine + H(+) = S-adenosyl 3-(methylsulfanyl)propylamine + CO2. The protein operates within amine and polyamine biosynthesis; S-adenosylmethioninamine biosynthesis; S-adenosylmethioninamine from S-adenosyl-L-methionine: step 1/1. Catalyzes the decarboxylation of S-adenosylmethionine to S-adenosylmethioninamine (dcAdoMet), the propylamine donor required for the synthesis of the polyamines spermine and spermidine from the diamine putrescine. This Aquifex aeolicus (strain VF5) protein is S-adenosylmethionine decarboxylase proenzyme.